Consider the following 85-residue polypeptide: V-type proton ATPase subunit f (85 aa).

2 helical membrane-spanning segments follow: residues cysteine 13 to isoleucine 33 and cysteine 56 to valine 76.

V-ATPase is a heteromultimeric enzyme composed of a peripheral catalytic V1 complex (components A to H) attached to an integral membrane V0 proton pore complex (components: a, c, c', c'', d, e, f and VOA1).

The protein localises to the endoplasmic reticulum membrane. Its function is as follows. Accessory component of the V0 complex of vacuolar(H+)-ATPase (V-ATPase), a multisubunit enzyme composed of a peripheral complex (V1) that hydrolyzes ATP and a membrane integral complex (V0) that translocates protons. V-ATPase is responsible for acidifying and maintaining the pH of intracellular compartments. This chain is V-type proton ATPase subunit f, found in Schizosaccharomyces pombe (strain 972 / ATCC 24843) (Fission yeast).